Reading from the N-terminus, the 406-residue chain is Serine/threonine transporter SstT (406 aa).

Helical transmembrane passes span 21 to 41, 45 to 65, 79 to 99, 138 to 158, 179 to 199, 213 to 233, 285 to 305, 313 to 333, and 360 to 380; these read LIIG…VAIL, FVGA…MGAI, ILIL…IASF, ALMN…GLAL, VVKW…FDSI, LLLL…PLIV, ISIP…IAVL, LGIT…AIAA, and IAMQ…SCET.

This sequence belongs to the dicarboxylate/amino acid:cation symporter (DAACS) (TC 2.A.23) family.

Its subcellular location is the cell membrane. It catalyses the reaction L-serine(in) + Na(+)(in) = L-serine(out) + Na(+)(out). The catalysed reaction is L-threonine(in) + Na(+)(in) = L-threonine(out) + Na(+)(out). Functionally, involved in the import of serine and threonine into the cell, with the concomitant import of sodium (symport system). The polypeptide is Serine/threonine transporter SstT (Desulfitobacterium hafniense (strain Y51)).